The sequence spans 493 residues: Cytoplasmic tRNA 2-thiolation protein 2 (493 aa).

Phosphoserine is present on serine 489.

The protein belongs to the CTU2/NCS2 family. In terms of assembly, interacts with NCS6 and URM1. May act by forming a heterodimer with NCS6.

It is found in the cytoplasm. The protein operates within tRNA modification; 5-methoxycarbonylmethyl-2-thiouridine-tRNA biosynthesis. Plays a central role in 2-thiolation of mcm(5)S(2)U at tRNA wobble positions of tRNA(Lys), tRNA(Glu) and tRNA(Gln). May act by forming a heterodimer with NCS6 that ligates sulfur from thiocarboxylated URM1 onto the uridine of tRNAs at wobble position. Prior mcm(5) tRNA modification by the elongator complex is required for 2-thiolation. May also be involved in protein urmylation. This Saccharomyces cerevisiae (strain YJM789) (Baker's yeast) protein is Cytoplasmic tRNA 2-thiolation protein 2.